Consider the following 235-residue polypeptide: Large ribosomal subunit protein uL1 (235 aa).

It belongs to the universal ribosomal protein uL1 family. Part of the 50S ribosomal subunit.

Its function is as follows. Binds directly to 23S rRNA. The L1 stalk is quite mobile in the ribosome, and is involved in E site tRNA release. In terms of biological role, protein L1 is also a translational repressor protein, it controls the translation of the L11 operon by binding to its mRNA. This Micrococcus luteus (strain ATCC 4698 / DSM 20030 / JCM 1464 / CCM 169 / CCUG 5858 / IAM 1056 / NBRC 3333 / NCIMB 9278 / NCTC 2665 / VKM Ac-2230) (Micrococcus lysodeikticus) protein is Large ribosomal subunit protein uL1.